The following is a 118-amino-acid chain: Small ribosomal subunit protein uS13 (118 aa).

The interval 94 to 118 (SLPLRGQRTKTNARTRKGPRKPIRK) is disordered.

Belongs to the universal ribosomal protein uS13 family. Part of the 30S ribosomal subunit. Forms a loose heterodimer with protein S19. Forms two bridges to the 50S subunit in the 70S ribosome.

Located at the top of the head of the 30S subunit, it contacts several helices of the 16S rRNA. In the 70S ribosome it contacts the 23S rRNA (bridge B1a) and protein L5 of the 50S subunit (bridge B1b), connecting the 2 subunits; these bridges are implicated in subunit movement. Contacts the tRNAs in the A and P-sites. This chain is Small ribosomal subunit protein uS13, found in Shewanella halifaxensis (strain HAW-EB4).